The primary structure comprises 30 residues: Cysteine-rich venom protein okinavin (30 aa).

The segment at 1–30 (SVDFDSESPRKPXIQNEIVDLHNPLRRXVN) is disordered.

The protein belongs to the CRISP family. Contains 8 disulfide bonds. Expressed by the venom gland.

It is found in the secreted. In terms of biological role, inhibits calcium-activated potassium channels (KCa), voltage-gated potassium channel (Kv), and the calcium release channel/ryanodine receptor (RyR). The protein is Cysteine-rich venom protein okinavin of Ovophis okinavensis (Ryukyu Island pit viper).